Here is a 272-residue protein sequence, read N- to C-terminus: Low-density lipoprotein receptor class A domain-containing protein 2 (272 aa).

Positions 1-25 (MEACCLLQLPQRLLLLGAAALTATA) are cleaved as a signal peptide. Residues 26-233 (LETADLAELC…GSTDAHTSRS (208 aa)) are Extracellular-facing. Asparagine 97 is a glycosylation site (N-linked (GlcNAc...) asparagine). Positions 172 to 214 (PCGAYFRCQNGRCIPSSLVCDPWGMDNCGDGSDQGSWSPADCR) constitute an LDL-receptor class A domain. 3 disulfides stabilise this stretch: cysteine 173-cysteine 184, cysteine 179-cysteine 199, and cysteine 191-cysteine 213. The disordered stretch occupies residues 202 to 272 (GSDQGSWSPA…QDAALEGSTE (71 aa)). A compositionally biased stretch (polar residues) spans 220–236 (PSQTGSTDAHTSRSLTP). The chain crosses the membrane as a helical span at residues 234 to 250 (LTPSPALGSAGSLWIAA). The Cytoplasmic segment spans residues 251-272 (ERSSPAGRDPTRQDAALEGSTE).

This sequence belongs to the LDLR family.

The protein localises to the membrane. The chain is Low-density lipoprotein receptor class A domain-containing protein 2 (LDLRAD2) from Homo sapiens (Human).